A 636-amino-acid chain; its full sequence is Probable potassium transport system protein Kup (636 aa).

Helical transmembrane passes span 22–42 (LGLL…SPLY), 64–84 (ILSL…VMFI), 115–135 (LMVI…MITP), 150–170 (FDGI…ALFL), 182–202 (LFGP…VHGI), 220–240 (FFVV…LALT), 261–281 (WFIL…ALLL), 293–313 (LLAP…ATVI), 351–371 (IYIG…VIGF), 383–403 (VAVT…MLLL), 408–428 (PVLA…FFAA), and 433–453 (IVQG…LMST).

Belongs to the HAK/KUP transporter (TC 2.A.72) family.

The protein localises to the cell inner membrane. The catalysed reaction is K(+)(in) + H(+)(in) = K(+)(out) + H(+)(out). Transport of potassium into the cell. Likely operates as a K(+):H(+) symporter. The sequence is that of Probable potassium transport system protein Kup from Pseudomonas putida (strain GB-1).